Consider the following 461-residue polypeptide: Bifunctional protein GlmU (461 aa).

The segment at 1–229 is pyrophosphorylase; it reads MNKYVVILAA…FSESLGVNDR (229 aa). UDP-N-acetyl-alpha-D-glucosamine is bound by residues 8 to 11, K22, Q72, and 77 to 78; these read LAAG and GT. Residue D102 participates in Mg(2+) binding. Positions 139, 154, 169, and 227 each coordinate UDP-N-acetyl-alpha-D-glucosamine. Residue N227 coordinates Mg(2+). The linker stretch occupies residues 230 to 250; sequence IALAQATKIMQRRINEEHMKN. The segment at 251–461 is N-acetyltransferase; the sequence is GVSFIDPDTA…LPLSKDKEWE (211 aa). Positions 332 and 350 each coordinate UDP-N-acetyl-alpha-D-glucosamine. H362 functions as the Proton acceptor in the catalytic mechanism. UDP-N-acetyl-alpha-D-glucosamine is bound by residues Y365 and N376. Residues 385–386, A422, and R439 contribute to the acetyl-CoA site; that span reads NY.

The protein in the N-terminal section; belongs to the N-acetylglucosamine-1-phosphate uridyltransferase family. This sequence in the C-terminal section; belongs to the transferase hexapeptide repeat family. Homotrimer. Mg(2+) is required as a cofactor.

It is found in the cytoplasm. It carries out the reaction alpha-D-glucosamine 1-phosphate + acetyl-CoA = N-acetyl-alpha-D-glucosamine 1-phosphate + CoA + H(+). The catalysed reaction is N-acetyl-alpha-D-glucosamine 1-phosphate + UTP + H(+) = UDP-N-acetyl-alpha-D-glucosamine + diphosphate. It functions in the pathway nucleotide-sugar biosynthesis; UDP-N-acetyl-alpha-D-glucosamine biosynthesis; N-acetyl-alpha-D-glucosamine 1-phosphate from alpha-D-glucosamine 6-phosphate (route II): step 2/2. The protein operates within nucleotide-sugar biosynthesis; UDP-N-acetyl-alpha-D-glucosamine biosynthesis; UDP-N-acetyl-alpha-D-glucosamine from N-acetyl-alpha-D-glucosamine 1-phosphate: step 1/1. It participates in bacterial outer membrane biogenesis; LPS lipid A biosynthesis. Its function is as follows. Catalyzes the last two sequential reactions in the de novo biosynthetic pathway for UDP-N-acetylglucosamine (UDP-GlcNAc). The C-terminal domain catalyzes the transfer of acetyl group from acetyl coenzyme A to glucosamine-1-phosphate (GlcN-1-P) to produce N-acetylglucosamine-1-phosphate (GlcNAc-1-P), which is converted into UDP-GlcNAc by the transfer of uridine 5-monophosphate (from uridine 5-triphosphate), a reaction catalyzed by the N-terminal domain. This chain is Bifunctional protein GlmU, found in Lactobacillus gasseri (strain ATCC 33323 / DSM 20243 / BCRC 14619 / CIP 102991 / JCM 1131 / KCTC 3163 / NCIMB 11718 / NCTC 13722 / AM63).